Here is a 299-residue protein sequence, read N- to C-terminus: tRNA pseudouridine synthase B (299 aa).

D45 (nucleophile) is an active-site residue.

It belongs to the pseudouridine synthase TruB family. Type 1 subfamily.

The catalysed reaction is uridine(55) in tRNA = pseudouridine(55) in tRNA. In terms of biological role, responsible for synthesis of pseudouridine from uracil-55 in the psi GC loop of transfer RNAs. The polypeptide is tRNA pseudouridine synthase B (Streptomyces griseus subsp. griseus (strain JCM 4626 / CBS 651.72 / NBRC 13350 / KCC S-0626 / ISP 5235)).